The primary structure comprises 239 residues: mRNA turnover protein 4 homolog (239 aa).

A disordered region spans residues 216-239 (QQMDDDLPESAPESEGESEEEDDS). Positions 218–239 (MDDDLPESAPESEGESEEEDDS) are enriched in acidic residues. Phosphoserine is present on residues Ser225, Ser229, and Ser233.

It belongs to the universal ribosomal protein uL10 family. In terms of assembly, associates with the pre-60S ribosomal particle. Interacts with MINAS-60 (product of an alternative open reading frame of RBM10).

Its subcellular location is the nucleus. It is found in the nucleolus. The protein localises to the cytoplasm. Its function is as follows. Component of the ribosome assembly machinery. Nuclear paralog of the ribosomal protein P0, it binds pre-60S subunits at an early stage of assembly in the nucleolus, and is replaced by P0 in cytoplasmic pre-60S subunits and mature 80S ribosomes. This Mus musculus (Mouse) protein is mRNA turnover protein 4 homolog (Mrto4).